A 134-amino-acid polypeptide reads, in one-letter code: Translation initiation factor 2 subunit beta (134 aa).

The protein belongs to the eIF-2-beta/eIF-5 family. As to quaternary structure, heterotrimer composed of an alpha, a beta and a gamma chain.

Functionally, eIF-2 functions in the early steps of protein synthesis by forming a ternary complex with GTP and initiator tRNA. The protein is Translation initiation factor 2 subunit beta of Pyrobaculum neutrophilum (strain DSM 2338 / JCM 9278 / NBRC 100436 / V24Sta) (Thermoproteus neutrophilus).